The primary structure comprises 125 residues: Small ribosomal subunit protein eS8 (125 aa).

The interval 1–20 is disordered; it reads MIWQGRSRRKPSGGFYRKAR.

Belongs to the eukaryotic ribosomal protein eS8 family. As to quaternary structure, part of the 30S ribosomal subunit.

The sequence is that of Small ribosomal subunit protein eS8 (rps8e) from Archaeoglobus fulgidus (strain ATCC 49558 / DSM 4304 / JCM 9628 / NBRC 100126 / VC-16).